A 673-amino-acid chain; its full sequence is Xaa-Pro aminopeptidase 2 (673 aa).

The first 21 residues, 1 to 21 (MAQACWGCYPWLVLICACAWG), serve as a signal peptide directing secretion. N-linked (GlcNAc...) asparagine glycans are attached at residues Asn-34, Asn-48, and Asn-64. Residue Arg-115 participates in substrate binding. Residues Asn-277, Asn-290, and Asn-294 are each glycosylated (N-linked (GlcNAc...) asparagine). Substrate is bound at residue His-429. Position 449 (Asp-449) interacts with Mn(2+). The Zn(2+) site is built by Asp-449, Asp-460, and His-523. Residues His-523, His-532, and Glu-554 each coordinate substrate. Glu-554 and Glu-568 together coordinate Zn(2+). Ala-649 carries GPI-anchor amidated alanine lipidation. Positions 650 to 673 (RAAPTTSLGSLMTVSALAILGWSV) are cleaved as a propeptide — removed in mature form.

Belongs to the peptidase M24B family. Homotrimer. The cofactor is Zn(2+). In terms of processing, N-glycosylated. In terms of tissue distribution, kidney.

The protein localises to the cell membrane. It catalyses the reaction Release of any N-terminal amino acid, including proline, that is linked to proline, even from a dipeptide or tripeptide.. With respect to regulation, inhibited by apstatin and the metal ion chelator EDTA. Potently inhibited by the converting enzyme inhibitors cilazaprilat; enalaprilat; L155,212; ramiprilat and YS 980. Also inhibited to a lesser extent by indolaprilat; quinaprilat; spiraprilat; captopril and zofenoprilat. Functionally, membrane-bound metalloprotease which catalyzes the removal of a penultimate prolyl residue from the N-termini of peptides, such as Arg-Pro-Pro. May play a role in the metabolism of the vasodilator bradykinin. The polypeptide is Xaa-Pro aminopeptidase 2 (XPNPEP2) (Sus scrofa (Pig)).